A 106-amino-acid polypeptide reads, in one-letter code: Thioredoxin (106 aa).

The 105-residue stretch at 2–106 (SHYIELTEEN…LKEQLNKLLG (105 aa)) folds into the Thioredoxin domain. Cysteine 30 and cysteine 33 are oxidised to a cystine.

The protein belongs to the thioredoxin family.

Its function is as follows. Participates in various redox reactions through the reversible oxidation of its active center dithiol to a disulfide and catalyzes dithiol-disulfide exchange reactions. The chain is Thioredoxin (trxA) from Helicobacter pylori (strain J99 / ATCC 700824) (Campylobacter pylori J99).